Consider the following 162-residue polypeptide: Sorting nexin-3 (162 aa).

Alanine 2 carries the post-translational modification N-acetylalanine. Residues 27–151 form the PX domain; it reads NFLEIDVSNP…HMFLQDEIID (125 aa). Position 43 is an omega-N-methylarginine (arginine 43). Residues arginine 70, serine 72, lysine 95, and arginine 118 each coordinate a 1,2-diacyl-sn-glycero-3-phospho-(1D-myo-inositol-3-phosphate). Serine 72 is modified (phosphoserine). Lysine 95 participates in a covalent cross-link: Glycyl lysine isopeptide (Lys-Gly) (interchain with G-Cter in SUMO2). The segment at 147 to 162 is binds predominantly to PtdIns(P5) and weaker to PtdIns(P3) abd PtdIns(P4); involved in neurite outgrowth regulation; that stretch reads DEIIDKSYTPSKIRHA.

The protein belongs to the sorting nexin family. In terms of assembly, interacts with VPS26A, VPS29 and VPS35; the interaction with VPS35 is direct. The association with the retromer CSC subcomplex subunits is proposed to represent a functional distinct retromer variant described as SNX3-retromer complex. Interacts with USP10 and SCNN1A. Interacts with TRFC. Interacts with SNX8; 2 molecules of SNX8 seems to associate with one molecule of SNX3. Interacts with PTPRU. Interacts with MON2 and DOP1B. Ubiquitinated, leading to its proteasomal degradation. Deubiquitinated by USP10.

The protein localises to the early endosome. Its subcellular location is the cytoplasmic vesicle. It is found in the phagosome. Phosphoinositide-binding protein required for multivesicular body formation. Specifically binds phosphatidylinositol 3-phosphate (PtdIns(P3)). Can also bind phosphatidylinositol 4-phosphate (PtdIns(P4)), phosphatidylinositol 5-phosphate (PtdIns(P5)) and phosphatidylinositol 3,5-biphosphate (PtdIns(3,5)P2). Plays a role in protein transport between cellular compartments. Together with RAB7A facilitates endosome membrane association of the retromer cargo-selective subcomplex (CSC/VPS). May in part act as component of the SNX3-retromer complex which mediates the retrograde endosome-to-TGN transport of WLS distinct from the SNX-BAR retromer pathway. Promotes stability and cell surface expression of epithelial sodium channel (ENAC) subunits SCNN1A and SCNN1G. Not involved in EGFR degradation. Involved in the regulation of phagocytosis in dendritic cells possibly by regulating EEA1 recruitment to the nascent phagosomes. Involved in iron homeostasis through regulation of endocytic recycling of the transferrin receptor TFRC presumably by delivering the transferrin:transferrin receptor complex to recycling endosomes; the function may involve the CSC retromer subcomplex. In the case of Salmonella enterica infection plays arole in maturation of the Salmonella-containing vacuole (SCV) and promotes recruitment of LAMP1 to SCVs. The chain is Sorting nexin-3 from Homo sapiens (Human).